The sequence spans 382 residues: uncharacterized protein (382 aa).

12 consecutive transmembrane segments (helical) span residues 8–28 (VMLLLCGLLLLTLAIAVLNTL), 45–65 (MVSSSYFTGNLVGTLFTGYLI), 75–95 (YLASLIFAAGCVGLGGMVGFW), 102–122 (FIAGIGCAMIWVVVESALMCS), 131–151 (LLAAYMMAYYMGTFLGQLLVS), 157–177 (LLHVLPWVTGMILAGILPLLF), 204–224 (LGVNGCIISGIVLGSLYGLMP), 231–251 (GMANASIGFWMAVLVSAGILG), 270–290 (VQVFVVILGSIAMLTQAAMAP), 291–311 (ALFILGAAGFTLYPVAMAWAC), 325–345 (ALLLSYTVGSLLGPSFAAMLM), and 349–369 (SDNLLFIMIASVSFIYLLMLL).

The protein belongs to the major facilitator superfamily. YcaD (TC 2.A.1.26) family.

The protein localises to the cell inner membrane. This is an uncharacterized protein from Salmonella dublin (strain CT_02021853).